Reading from the N-terminus, the 221-residue chain is Keratin-associated protein 10-3 (221 aa).

Repeat copies occupy residues 26-30 (CCEPP), 31-35 (CCATS), 36-40 (CCAPA), 57-61 (CCQAA), 79-83 (CCQQS), 89-93 (CCTSS), 99-103 (CCVPV), 104-108 (CCKPV), 109-113 (CCVPV), 114-118 (CCKPV), 119-123 (CCKPI), 124-128 (CCVPV), 136-140 (CCQQS), 146-150 (CCTTS), 151-155 (CCRPS), 177-181 (CCAPA), 188-192 (CCRPA), and 210-214 (CCGLS). Residues 26–214 (CCEPPCCATS…RLSSACCGLS (189 aa)) are 18 X 5 AA repeats of C-C-X(3).

It belongs to the KRTAP type 10 family. As to quaternary structure, interacts with hair keratins. As to expression, restricted to a narrow region of the hair fiber cuticle, lying approximately 20 cell layers above the apex of the dermal papilla of the hair root; not detected in any other tissues.

In the hair cortex, hair keratin intermediate filaments are embedded in an interfilamentous matrix, consisting of hair keratin-associated proteins (KRTAP), which are essential for the formation of a rigid and resistant hair shaft through their extensive disulfide bond cross-linking with abundant cysteine residues of hair keratins. The matrix proteins include the high-sulfur and high-glycine-tyrosine keratins. The polypeptide is Keratin-associated protein 10-3 (KRTAP10-3) (Homo sapiens (Human)).